Consider the following 206-residue polypeptide: Threonine efflux protein (206 aa).

The chain crosses the membrane as a helical span at residues 1–21; sequence MLMLFFTVAMVHIVALMSPGP. At 22 to 43 the chain is on the periplasmic side; sequence DFFFVSQTAVSRSRKEAMMGVL. A helical transmembrane segment spans residues 44–64; it reads GITCGVMVWAGVALLGLHLII. The Cytoplasmic segment spans residues 65–66; it reads EK. The chain crosses the membrane as a helical span at residues 67–87; that stretch reads MAWLHTIIMVGGGLYLCWMGY. The Periplasmic segment spans residues 88 to 149; that stretch reads QMLRGALKKQ…VGDNVGAAAR (62 aa). A helical transmembrane segment spans residues 150 to 173; sequence WGIFALITLETLAWFTVVASLFAL. Topologically, residues 174–206 are cytoplasmic; the sequence is PKMRRGYQRLAKWIDGFAGALFAGFGIHLIISR.

This sequence belongs to the Rht family.

The protein localises to the cell inner membrane. Functionally, conducts the efflux of threonine. The sequence is that of Threonine efflux protein (rhtC) from Salmonella typhi.